Here is a 557-residue protein sequence, read N- to C-terminus: Formate--tetrahydrofolate ligase (557 aa).

66-73 is a binding site for ATP; it reads TPAGEGKS.

The protein belongs to the formate--tetrahydrofolate ligase family.

The catalysed reaction is (6S)-5,6,7,8-tetrahydrofolate + formate + ATP = (6R)-10-formyltetrahydrofolate + ADP + phosphate. It participates in one-carbon metabolism; tetrahydrofolate interconversion. This Clostridium botulinum (strain ATCC 19397 / Type A) protein is Formate--tetrahydrofolate ligase.